Consider the following 230-residue polypeptide: Esterase OVCA2 (230 aa).

Active-site charge relay system residues include S124, D182, and H209.

Belongs to the LovG family.

The enzyme catalyses a carboxylic ester + H2O = an alcohol + a carboxylate + H(+). Its function is as follows. Exhibits ester hydrolase activity with a strong preference for long-chain alkyl ester substrates and high selectivity against a variety of short, branched, and substituted esters. Is able to hydrolyze ester bonds within a wide range of p-nitrophenyl derivatives (C2-C14) in vitro, with a strong preference toward substrates of &gt;8 carbons. This Xenopus tropicalis (Western clawed frog) protein is Esterase OVCA2 (ovca2).